The following is a 407-amino-acid chain: Prolyl hydroxylase EGLN2 (407 aa).

2 stretches are compositionally biased toward low complexity: residues 1-24 (MDSPCQPQPLSQALPQLPGSSSEP) and 57-75 (ASAGSGTPRATATSTTASP). Disordered regions lie at residues 1-34 (MDSPCQPQPLSQALPQLPGSSSEPLEPEPGRARM), 50-89 (CPGVPSEASAGSGTPRATATSTTASPLRDGFGGQDGGELR), and 108-157 (AAQG…CSSG). A Bipartite nuclear localization signal motif is present at residues 89-134 (RPLQSEGAAALVTKGCQRLAAQGARPEAPKRKWAEDGGDAPSPSKR). A Phosphoserine modification is found at serine 130. Residues 225-235 (VSQRAIPPRSI) are beta(2)beta(3) 'finger-like' loop. A Fe2OG dioxygenase domain is found at 278–376 (GRTKAMVACY…RYAITVWYFD (99 aa)). Fe cation contacts are provided by histidine 297, aspartate 299, and histidine 358. Arginine 367 provides a ligand contact to 2-oxoglutarate.

As to quaternary structure, interacts (preferably isoform p40) with SIAH2; the interaction targets both SIAH2 isoforms for proteasomal degradation in vitro. Interacts with LIMD1, WTIP and AJUBA. Fe(2+) serves as cofactor. Requires L-ascorbate as cofactor. In terms of processing, ubiquitinated by SIAH1 and/or SIAH2 in response to the unfolded protein response (UPR), leading to its degradation. Expressed in adult and fetal heart, brain, liver, lung, skeletal muscle, and kidney. Also expressed in testis and placenta. Highest levels in adult brain, placenta, lung, kidney, and testis. Expressed in hormone responsive tissues, including normal and cancerous mammary, ovarian and prostate epithelium.

It localises to the nucleus. The catalysed reaction is L-prolyl-[protein] + 2-oxoglutarate + O2 = trans-4-hydroxy-L-prolyl-[protein] + succinate + CO2. The enzyme catalyses L-prolyl-[hypoxia-inducible factor alpha subunit] + 2-oxoglutarate + O2 = trans-4-hydroxy-L-prolyl-[hypoxia-inducible factor alpha subunit] + succinate + CO2. In terms of biological role, prolyl hydroxylase that mediates hydroxylation of proline residues in target proteins, such as ATF4, IKBKB, CEP192 and HIF1A. Target proteins are preferentially recognized via a LXXLAP motif. Cellular oxygen sensor that catalyzes, under normoxic conditions, the post-translational formation of 4-hydroxyproline in hypoxia-inducible factor (HIF) alpha proteins. Hydroxylates a specific proline found in each of the oxygen-dependent degradation (ODD) domains (N-terminal, NODD, and C-terminal, CODD) of HIF1A. Also hydroxylates HIF2A. Has a preference for the CODD site for both HIF1A and HIF2A. Hydroxylated HIFs are then targeted for proteasomal degradation via the von Hippel-Lindau ubiquitination complex. Under hypoxic conditions, the hydroxylation reaction is attenuated allowing HIFs to escape degradation resulting in their translocation to the nucleus, heterodimerization with HIF1B, and increased expression of hypoxy-inducible genes. EGLN2 is involved in regulating hypoxia tolerance and apoptosis in cardiac and skeletal muscle. Also regulates susceptibility to normoxic oxidative neuronal death. Links oxygen sensing to cell cycle and primary cilia formation by hydroxylating the critical centrosome component CEP192 which promotes its ubiquitination and subsequent proteasomal degradation. Hydroxylates IKBKB, mediating NF-kappa-B activation in hypoxic conditions. Also mediates hydroxylation of ATF4, leading to decreased protein stability of ATF4. This is Prolyl hydroxylase EGLN2 from Homo sapiens (Human).